The primary structure comprises 381 residues: Homoserine O-succinyltransferase (381 aa).

One can recognise an AB hydrolase-1 domain in the interval 53-361 (ILICHALSGS…DSVHGHDAFL (309 aa)). Ser-157 functions as the Nucleophile in the catalytic mechanism. Arg-227 is a substrate binding site. Active-site residues include Asp-324 and His-357. Asp-358 provides a ligand contact to substrate.

This sequence belongs to the AB hydrolase superfamily. MetX family. As to quaternary structure, homodimer.

Its subcellular location is the cytoplasm. It catalyses the reaction L-homoserine + succinyl-CoA = O-succinyl-L-homoserine + CoA. Its pathway is amino-acid biosynthesis; L-methionine biosynthesis via de novo pathway; O-succinyl-L-homoserine from L-homoserine: step 1/1. Transfers a succinyl group from succinyl-CoA to L-homoserine, forming succinyl-L-homoserine. The chain is Homoserine O-succinyltransferase from Saccharophagus degradans (strain 2-40 / ATCC 43961 / DSM 17024).